Consider the following 147-residue polypeptide: Deoxyuridine 5'-triphosphate nucleotidohydrolase (147 aa).

Arg-24 serves as a coordination point for Mg(2+). Residues 68-70 (PRS), 82-85 (GVID), Tyr-88, Gly-93, Ile-95, and Arg-111 each bind dUTP.

It belongs to the dUTPase family.

It carries out the reaction dUTP + H2O = dUMP + diphosphate + H(+). Functionally, this enzyme is involved in nucleotide metabolism: it produces dUMP, the immediate precursor of thymidine nucleotides and it decreases the intracellular concentration of dUTP so that uracil cannot be incorporated into DNA. The polypeptide is Deoxyuridine 5'-triphosphate nucleotidohydrolase (OPG046) (Homo sapiens (Human)).